Here is a 93-residue protein sequence, read N- to C-terminus: Exodeoxyribonuclease 7 small subunit (93 aa).

The disordered stretch occupies residues 1 to 22; sequence MAKTASPGATPPGNGAEPLPDN.

This sequence belongs to the XseB family. In terms of assembly, heterooligomer composed of large and small subunits.

The protein localises to the cytoplasm. It carries out the reaction Exonucleolytic cleavage in either 5'- to 3'- or 3'- to 5'-direction to yield nucleoside 5'-phosphates.. In terms of biological role, bidirectionally degrades single-stranded DNA into large acid-insoluble oligonucleotides, which are then degraded further into small acid-soluble oligonucleotides. This chain is Exodeoxyribonuclease 7 small subunit, found in Burkholderia multivorans (strain ATCC 17616 / 249).